Here is a 152-residue protein sequence, read N- to C-terminus: Superoxide dismutase [Cu-Zn] 5 (152 aa).

Cu cation contacts are provided by His-44, His-46, and His-61. Cys-55 and Cys-144 form a disulfide bridge. The Zn(2+) site is built by His-61, His-69, His-78, and Asp-81. His-118 is a Cu cation binding site.

The protein belongs to the Cu-Zn superoxide dismutase family. The cofactor is Cu cation. Zn(2+) serves as cofactor.

It catalyses the reaction 2 superoxide + 2 H(+) = H2O2 + O2. Destroys radicals which are normally produced within the cells and which are toxic to biological systems. This is Superoxide dismutase [Cu-Zn] 5 (sodE) from Dictyostelium discoideum (Social amoeba).